An 857-amino-acid polypeptide reads, in one-letter code: RNA-directed RNA polymerase 2a (857 aa).

One can recognise a RdRp catalytic domain in the interval 511-624 (KHCLEIDLSK…FSLLPPVGDP (114 aa)). Residues 780–789 (IERRCNDKRR) show a composition bias toward basic and acidic residues. A disordered region spans residues 780 to 827 (IERRCNDKRRTPTGSYGGGEEAETKVSQTESTGTRSQKSQRESAFKSQ). The span at 804–816 (KVSQTESTGTRSQ) shows a compositional bias: polar residues.

It belongs to the ssRNA positive-strand viruses RNA-directed RNA polymerase family. Interacts with replication protein 1a.

The enzyme catalyses RNA(n) + a ribonucleoside 5'-triphosphate = RNA(n+1) + diphosphate. In terms of biological role, RNA-dependent RNA polymerase which replicates the viral genome composed of 3 RNA segments, RNA1, RNA2 and RNA3. The chain is RNA-directed RNA polymerase 2a from Cucumber mosaic virus (strain FNY) (CMV).